A 572-amino-acid polypeptide reads, in one-letter code: Isocitrate dehydrogenase kinase/phosphatase (572 aa).

ATP contacts are provided by residues 317–323 (APGVRGM) and Lys-338. Residue Asp-373 is part of the active site.

It belongs to the AceK family.

The protein localises to the cytoplasm. The catalysed reaction is L-seryl-[isocitrate dehydrogenase] + ATP = O-phospho-L-seryl-[isocitrate dehydrogenase] + ADP + H(+). Bifunctional enzyme which can phosphorylate or dephosphorylate isocitrate dehydrogenase (IDH) on a specific serine residue. This is a regulatory mechanism which enables bacteria to bypass the Krebs cycle via the glyoxylate shunt in response to the source of carbon. When bacteria are grown on glucose, IDH is fully active and unphosphorylated, but when grown on acetate or ethanol, the activity of IDH declines drastically concomitant with its phosphorylation. This chain is Isocitrate dehydrogenase kinase/phosphatase, found in Ectopseudomonas mendocina (strain ymp) (Pseudomonas mendocina).